A 660-amino-acid chain; its full sequence is Bifunctional polymyxin resistance protein ArnA (660 aa).

The tract at residues 1-304 (MKAVIFAYHD…TLGLVAGARL (304 aa)) is formyltransferase ArnAFT. His-104 functions as the Proton donor; for formyltransferase activity in the catalytic mechanism. (6R)-10-formyltetrahydrofolate-binding positions include Arg-114 and 136–140 (VKRAD). Residues 314 to 660 (RRIRVLILGV…RSVDVAERAS (347 aa)) form a dehydrogenase ArnADH region. NAD(+)-binding positions include Asp-347 and 368 to 369 (DI). Residues Ala-393, Tyr-398, and 432 to 433 (TS) each bind UDP-alpha-D-glucuronate. Glu-434 serves as the catalytic Proton acceptor; for decarboxylase activity. Residues Arg-460, Asn-492, 526 to 535 (KLIDGGQQKR), and Tyr-613 each bind UDP-alpha-D-glucuronate. The Proton donor; for decarboxylase activity role is filled by Arg-619.

In the N-terminal section; belongs to the Fmt family. UDP-L-Ara4N formyltransferase subfamily. This sequence in the C-terminal section; belongs to the NAD(P)-dependent epimerase/dehydratase family. UDP-glucuronic acid decarboxylase subfamily. As to quaternary structure, homohexamer, formed by a dimer of trimers.

The enzyme catalyses UDP-alpha-D-glucuronate + NAD(+) = UDP-beta-L-threo-pentopyranos-4-ulose + CO2 + NADH. The catalysed reaction is UDP-4-amino-4-deoxy-beta-L-arabinose + (6R)-10-formyltetrahydrofolate = UDP-4-deoxy-4-formamido-beta-L-arabinose + (6S)-5,6,7,8-tetrahydrofolate + H(+). Its pathway is nucleotide-sugar biosynthesis; UDP-4-deoxy-4-formamido-beta-L-arabinose biosynthesis; UDP-4-deoxy-4-formamido-beta-L-arabinose from UDP-alpha-D-glucuronate: step 1/3. It functions in the pathway nucleotide-sugar biosynthesis; UDP-4-deoxy-4-formamido-beta-L-arabinose biosynthesis; UDP-4-deoxy-4-formamido-beta-L-arabinose from UDP-alpha-D-glucuronate: step 3/3. The protein operates within bacterial outer membrane biogenesis; lipopolysaccharide biosynthesis. Functionally, bifunctional enzyme that catalyzes the oxidative decarboxylation of UDP-glucuronic acid (UDP-GlcUA) to UDP-4-keto-arabinose (UDP-Ara4O) and the addition of a formyl group to UDP-4-amino-4-deoxy-L-arabinose (UDP-L-Ara4N) to form UDP-L-4-formamido-arabinose (UDP-L-Ara4FN). The modified arabinose is attached to lipid A and is required for resistance to polymyxin and cationic antimicrobial peptides. This chain is Bifunctional polymyxin resistance protein ArnA, found in Salmonella newport (strain SL254).